The sequence spans 226 residues: ATP synthase F(0) complex subunit a (226 aa).

6 helical membrane-spanning segments follow: residues 6–26 (FAPFITPTVLGISVLPLIMIF), 68–88 (WTLMLITLIIFIASTNLLGLL), 97–117 (QLSMNMGMAIPLWMGTVLMGF), 138–158 (IPMLIIIETISLFIQPLALAV), 164–184 (ITAGHLLIHLIGSATLALSSI), and 193–213 (FTILFLLTILEFAVALIQAYV).

This sequence belongs to the ATPase A chain family. Component of the ATP synthase complex composed at least of ATP5F1A/subunit alpha, ATP5F1B/subunit beta, ATP5MC1/subunit c (homooctomer), MT-ATP6/subunit a, MT-ATP8/subunit 8, ATP5ME/subunit e, ATP5MF/subunit f, ATP5MG/subunit g, ATP5MK/subunit k, ATP5MJ/subunit j, ATP5F1C/subunit gamma, ATP5F1D/subunit delta, ATP5F1E/subunit epsilon, ATP5PF/subunit F6, ATP5PB/subunit b, ATP5PD/subunit d, ATP5PO/subunit OSCP. ATP synthase complex consists of a soluble F(1) head domain (subunits alpha(3) and beta(3)) - the catalytic core - and a membrane F(0) domain - the membrane proton channel (subunits c, a, 8, e, f, g, k and j). These two domains are linked by a central stalk (subunits gamma, delta, and epsilon) rotating inside the F1 region and a stationary peripheral stalk (subunits F6, b, d, and OSCP). Interacts with DNAJC30; interaction is direct.

It localises to the mitochondrion inner membrane. The enzyme catalyses H(+)(in) = H(+)(out). Functionally, subunit a, of the mitochondrial membrane ATP synthase complex (F(1)F(0) ATP synthase or Complex V) that produces ATP from ADP in the presence of a proton gradient across the membrane which is generated by electron transport complexes of the respiratory chain. ATP synthase complex consist of a soluble F(1) head domain - the catalytic core - and a membrane F(1) domain - the membrane proton channel. These two domains are linked by a central stalk rotating inside the F(1) region and a stationary peripheral stalk. During catalysis, ATP synthesis in the catalytic domain of F(1) is coupled via a rotary mechanism of the central stalk subunits to proton translocation. With the subunit c (ATP5MC1), forms the proton-conducting channel in the F(0) domain, that contains two crucial half-channels (inlet and outlet) that facilitate proton movement from the mitochondrial intermembrane space (IMS) into the matrix. Protons are taken up via the inlet half-channel and released through the outlet half-channel, following a Grotthuss mechanism. This chain is ATP synthase F(0) complex subunit a, found in Ornithorhynchus anatinus (Duckbill platypus).